The chain runs to 215 residues: MQDELVWIDCEMTGLDLGSDKLIEIAALVTDADLNILGDGVDVVMHADDAALSGMIDVVAEMHSRSGLIDEVKASTVDLATAEAMVLDYINEHVKQPKTAPLAGNSIATDRAFIARDMPTLDSFLHYRMIDVSSIKELCRRWYPRIYFGQPPKGLTHRALADIHESIRELRFYRRTAFVPQPGPSTSEIAAVVAELSDGAGAQEETDSAEAPQSG.

Positions 5 to 170 (LVWIDCEMTG…ADIHESIREL (166 aa)) constitute an Exonuclease domain. Y127 is a catalytic residue. The disordered stretch occupies residues 196–215 (LSDGAGAQEETDSAEAPQSG).

This sequence belongs to the oligoribonuclease family.

The protein localises to the cytoplasm. In terms of biological role, 3'-to-5' exoribonuclease specific for small oligoribonucleotides. The polypeptide is Oligoribonuclease (Mycobacterium bovis (strain BCG / Pasteur 1173P2)).